Here is a 663-residue protein sequence, read N- to C-terminus: Beta-galactosidase YesZ (663 aa).

Arg107 contributes to the substrate binding site. Residue Cys111 participates in Zn(2+) binding. Residue Asn145 participates in substrate binding. Residue Glu146 is the Proton donor of the active site. Zn(2+) is bound by residues Cys154, Cys156, and Cys159. Catalysis depends on Glu297, which acts as the Nucleophile. 346–349 (EQPH) contacts substrate.

It belongs to the glycosyl hydrolase 42 family. As to quaternary structure, homotrimer.

The enzyme catalyses Hydrolysis of terminal non-reducing beta-D-galactose residues in beta-D-galactosides.. Functionally, may play a role in the degradation of rhamnogalacturonan derived from plant cell walls. The chain is Beta-galactosidase YesZ (yesZ) from Bacillus licheniformis (strain ATCC 14580 / DSM 13 / JCM 2505 / CCUG 7422 / NBRC 12200 / NCIMB 9375 / NCTC 10341 / NRRL NRS-1264 / Gibson 46).